The chain runs to 98 residues: Cell cycle protein GpsB (98 aa).

The stretch at 34–71 forms a coiled coil; the sequence is LDIVIKDYEAFQQELDELRQENARLKRQVEELQKRPTT.

Belongs to the GpsB family. In terms of assembly, forms polymers through the coiled coil domains. Interacts with PBP1, MreC and EzrA.

It is found in the cytoplasm. In terms of biological role, divisome component that associates with the complex late in its assembly, after the Z-ring is formed, and is dependent on DivIC and PBP2B for its recruitment to the divisome. Together with EzrA, is a key component of the system that regulates PBP1 localization during cell cycle progression. Its main role could be the removal of PBP1 from the cell pole after pole maturation is completed. Also contributes to the recruitment of PBP1 to the division complex. Not essential for septum formation. The sequence is that of Cell cycle protein GpsB from Geobacillus thermodenitrificans (strain NG80-2).